A 424-amino-acid polypeptide reads, in one-letter code: Enolase (424 aa).

Glutamine 162 is a (2R)-2-phosphoglycerate binding site. Glutamate 204 acts as the Proton donor in catalysis. The Mg(2+) site is built by aspartate 241, glutamate 284, and aspartate 311. 4 residues coordinate (2R)-2-phosphoglycerate: lysine 336, arginine 365, serine 366, and lysine 387. Lysine 336 acts as the Proton acceptor in catalysis.

This sequence belongs to the enolase family. Mg(2+) is required as a cofactor.

It localises to the cytoplasm. The protein localises to the secreted. Its subcellular location is the cell surface. The enzyme catalyses (2R)-2-phosphoglycerate = phosphoenolpyruvate + H2O. The protein operates within carbohydrate degradation; glycolysis; pyruvate from D-glyceraldehyde 3-phosphate: step 4/5. Its function is as follows. Catalyzes the reversible conversion of 2-phosphoglycerate (2-PG) into phosphoenolpyruvate (PEP). It is essential for the degradation of carbohydrates via glycolysis. This chain is Enolase, found in Parvibaculum lavamentivorans (strain DS-1 / DSM 13023 / NCIMB 13966).